Here is a 271-residue protein sequence, read N- to C-terminus: MSRIQNTFAALAAQGRKGLIPFITAGDPDPSRTVELMHALAEGGADVIELGVPFSDPMADGPVIQRSSERALAKGVTLRRVLDDVRRFRERDRQTPVVLMGYANPIERMGEDAFAAAARDAGVDGVLVVDYPPEESHDFAAKMRAAGIDPIFLLAPTSTDDRIAAVGEVASGYVYYVSLKGVTGAANLDVSTIEGKIPAIKSRVPLPVGVGFGIRDAATARAVAEVADAVVIGSRLVQLLEQAAPENAAAELKEFVAGLRAAIDGAAKPAA.

Residues Glu49 and Asp60 each act as proton acceptor in the active site.

Belongs to the TrpA family. In terms of assembly, tetramer of two alpha and two beta chains.

It carries out the reaction (1S,2R)-1-C-(indol-3-yl)glycerol 3-phosphate + L-serine = D-glyceraldehyde 3-phosphate + L-tryptophan + H2O. It participates in amino-acid biosynthesis; L-tryptophan biosynthesis; L-tryptophan from chorismate: step 5/5. The alpha subunit is responsible for the aldol cleavage of indoleglycerol phosphate to indole and glyceraldehyde 3-phosphate. This is Tryptophan synthase alpha chain from Burkholderia thailandensis (strain ATCC 700388 / DSM 13276 / CCUG 48851 / CIP 106301 / E264).